The chain runs to 160 residues: S-ribosylhomocysteine lyase (160 aa).

The Fe cation site is built by H57, H61, and C127.

This sequence belongs to the LuxS family. In terms of assembly, homodimer. Fe cation serves as cofactor.

It carries out the reaction S-(5-deoxy-D-ribos-5-yl)-L-homocysteine = (S)-4,5-dihydroxypentane-2,3-dione + L-homocysteine. Functionally, involved in the synthesis of autoinducer 2 (AI-2) which is secreted by bacteria and is used to communicate both the cell density and the metabolic potential of the environment. The regulation of gene expression in response to changes in cell density is called quorum sensing. Catalyzes the transformation of S-ribosylhomocysteine (RHC) to homocysteine (HC) and 4,5-dihydroxy-2,3-pentadione (DPD). This is S-ribosylhomocysteine lyase from Streptococcus pyogenes serotype M2 (strain MGAS10270).